The following is a 371-amino-acid chain: Alanine racemase (371 aa).

Lys-40 functions as the Proton acceptor; specific for D-alanine in the catalytic mechanism. Lys-40 bears the N6-(pyridoxal phosphate)lysine mark. Arg-138 lines the substrate pocket. The active-site Proton acceptor; specific for L-alanine is Tyr-267. Met-314 lines the substrate pocket.

Belongs to the alanine racemase family. Pyridoxal 5'-phosphate serves as cofactor.

The enzyme catalyses L-alanine = D-alanine. It functions in the pathway amino-acid biosynthesis; D-alanine biosynthesis; D-alanine from L-alanine: step 1/1. Functionally, catalyzes the interconversion of L-alanine and D-alanine. May also act on other amino acids. This chain is Alanine racemase (alr), found in Ligilactobacillus salivarius (strain UCC118) (Lactobacillus salivarius).